Consider the following 271-residue polypeptide: Aquaporin-2 (271 aa).

The Cytoplasmic segment spans residues 1–11; the sequence is MWELRSIAFSR. A helical transmembrane segment spans residues 12-32; it reads AVLAEFLATLLFVFFGLGSAL. Over 33 to 40 the chain is Extracellular; it reads NWPQALPS. The chain crosses the membrane as a helical span at residues 41 to 59; sequence VLQIAMAFGLAIGTLVQAL. At 60–64 the chain is on the cytoplasmic side; that stretch reads GHVSG. An intramembrane region (discontinuously helical) is located at residues 65 to 74; it reads AHINPAVTVA. Residues 68–70 carry the NPA 1 motif; sequence NPA. Residues 75 to 85 lie on the Cytoplasmic side of the membrane; it reads CLVGCHVSFLR. A helical membrane pass occupies residues 86–107; sequence AVFYVAAQLLGAVAGAALLHEI. Over 108-127 the chain is Extracellular; sequence TPPAIRGDLAVNALNNNSTA. Asn-123 carries N-linked (GlcNAc...) asparagine glycosylation. A helical membrane pass occupies residues 128-148; sequence GQAVTVELFLTLQLVLCIFAS. The Cytoplasmic portion of the chain corresponds to 149–156; the sequence is TDERRGDN. The chain crosses the membrane as a helical span at residues 157-176; sequence VGTPALSIGFSVALGHLLGI. At 177 to 180 the chain is on the extracellular side; that stretch reads HYTG. Residues 181–193 constitute an intramembrane region (discontinuously helical); the sequence is CSMNPARSLAPAI. The NPA 2 signature appears at 184–186; sequence NPA. Residues 194–201 are Extracellular-facing; the sequence is VTGKFDDH. Residues 202 to 222 form a helical membrane-spanning segment; the sequence is WVFWIGPLVGAIVASLLYNYV. Topologically, residues 223-271 are cytoplasmic; sequence LFPPAKSLSERLAVLKGLEPDTDWEEREVRRRQSVELHSPQSLPRGSKA. Positions 251–271 are disordered; sequence VRRRQSVELHSPQSLPRGSKA. The residue at position 256 (Ser-256) is a Phosphoserine. Over residues 261–271 the composition is skewed to polar residues; sequence SPQSLPRGSKA.

This sequence belongs to the MIP/aquaporin (TC 1.A.8) family. As to quaternary structure, homotetramer. In terms of processing, ser-256 phosphorylation is necessary and sufficient for expression at the apical membrane. Endocytosis is not phosphorylation-dependent. Post-translationally, N-glycosylated.

The protein resides in the apical cell membrane. It localises to the basolateral cell membrane. Its subcellular location is the cell membrane. The protein localises to the cytoplasmic vesicle membrane. It is found in the golgi apparatus. The protein resides in the trans-Golgi network membrane. It catalyses the reaction H2O(in) = H2O(out). The catalysed reaction is glycerol(in) = glycerol(out). Functionally, forms a water-specific channel that provides the plasma membranes of renal collecting duct with high permeability to water, thereby permitting water to move in the direction of an osmotic gradient. Could also be permeable to glycerol. This Bos taurus (Bovine) protein is Aquaporin-2.